Here is a 106-residue protein sequence, read N- to C-terminus: Iron-sulfur cluster assembly protein CyaY (106 aa).

It belongs to the frataxin family.

In terms of biological role, involved in iron-sulfur (Fe-S) cluster assembly. May act as a regulator of Fe-S biogenesis. In Salmonella agona (strain SL483), this protein is Iron-sulfur cluster assembly protein CyaY.